The chain runs to 201 residues: Peptide deformylase (201 aa).

The Fe cation site is built by cysteine 121 and histidine 163. Residue glutamate 164 is part of the active site. Histidine 167 contacts Fe cation.

It belongs to the polypeptide deformylase family. Fe(2+) serves as cofactor.

It carries out the reaction N-terminal N-formyl-L-methionyl-[peptide] + H2O = N-terminal L-methionyl-[peptide] + formate. Removes the formyl group from the N-terminal Met of newly synthesized proteins. Requires at least a dipeptide for an efficient rate of reaction. N-terminal L-methionine is a prerequisite for activity but the enzyme has broad specificity at other positions. The polypeptide is Peptide deformylase (Synechococcus sp. (strain CC9605)).